The sequence spans 428 residues: Immunoglobulin superfamily containing leucine-rich repeat protein (428 aa).

An N-terminal signal peptide occupies residues 1–18 (MQELRLLCLVVLVGLAQA). The 32-residue stretch at 19–50 (CPEPCECGEKYGFHIADCAYRDLQAVPSGFPA) folds into the LRRNT domain. N-linked (GlcNAc...) asparagine glycosylation occurs at N51. 5 LRR repeats span residues 51 to 72 (NVTT…AFRE), 75 to 96 (RLQS…ALAS), 99 to 122 (QLKS…HSLS), 123 to 144 (ALQL…AFRS), and 147 to 168 (ALRS…TFAP). The 52-residue stretch at 180 to 231 (NPFDCTCGIVWFKTWALTTAVSIPEQDNITCTSPHVLKGTRLNRLLPLPCSA) folds into the LRRCT domain. The region spanning 232–343 (PSVQLTYQPS…GSAESSVNVA (112 aa)) is the Ig-like domain. C257 and C327 are joined by a disulfide. A glycan (N-linked (GlcNAc...) asparagine) is linked at N309.

The protein localises to the secreted. The sequence is that of Immunoglobulin superfamily containing leucine-rich repeat protein (ISLR) from Bos taurus (Bovine).